A 450-amino-acid chain; its full sequence is Homogentisate 1,2-dioxygenase (450 aa).

His-304 functions as the Proton acceptor in the catalytic mechanism. Fe cation is bound by residues His-347 and Glu-353. Positions 362 and 383 each coordinate homogentisate. Residue His-383 participates in Fe cation binding.

Belongs to the homogentisate dioxygenase family. As to quaternary structure, hexamer; dimer of trimers. Fe cation serves as cofactor.

It catalyses the reaction homogentisate + O2 = 4-maleylacetoacetate + H(+). It participates in amino-acid degradation; L-phenylalanine degradation; acetoacetate and fumarate from L-phenylalanine: step 4/6. In terms of biological role, involved in the catabolism of homogentisate (2,5-dihydroxyphenylacetate or 2,5-OH-PhAc), a central intermediate in the degradation of phenylalanine and tyrosine. Catalyzes the oxidative ring cleavage of the aromatic ring of homogentisate to yield maleylacetoacetate. The polypeptide is Homogentisate 1,2-dioxygenase (Burkholderia mallei (strain NCTC 10229)).